Consider the following 493-residue polypeptide: Cholesteryl ester transfer protein (493 aa).

The N-terminal stretch at 1–17 is a signal peptide; it reads MLAATVLTLALLGNVHA. N-linked (GlcNAc...) asparagine glycans are attached at residues N59 and N105. A disulfide bridge connects residues C160 and C201. N-linked (GlcNAc...) asparagine glycosylation is found at N257, N358, and N413.

This sequence belongs to the BPI/LBP/Plunc superfamily. BPI/LBP family. In terms of tissue distribution, probably primarily expressed in liver and adipose tissues. Detected in adrenal gland, mesenteric fat, spleen and aorta.

Its subcellular location is the secreted. The catalysed reaction is cholesteryl (9Z-octadecenoate)(in) = cholesteryl (9Z-octadecenoate)(out). It carries out the reaction 1,2,3-tri-(9Z-octadecenoyl)-glycerol(in) = 1,2,3-tri-(9Z-octadecenoyl)-glycerol(out). It catalyses the reaction cholesteryl (9Z,12Z)-octadecadienoate(in) = cholesteryl (9Z,12Z)-octadecadienoate(out). Involved in the transfer of neutral lipids, including cholesteryl ester and triglyceride, among lipoprotein particles. Allows the net movement of cholesteryl ester from high density lipoproteins/HDL to triglyceride-rich very low density lipoproteins/VLDL, and the equimolar transport of triglyceride from VLDL to HDL. Regulates the reverse cholesterol transport, by which excess cholesterol is removed from peripheral tissues and returned to the liver for elimination. The chain is Cholesteryl ester transfer protein from Macaca fascicularis (Crab-eating macaque).